The following is a 275-amino-acid chain: Uroporphyrinogen-III synthase (275 aa).

This sequence belongs to the uroporphyrinogen-III synthase family.

It catalyses the reaction hydroxymethylbilane = uroporphyrinogen III + H2O. Its pathway is porphyrin-containing compound metabolism; protoporphyrin-IX biosynthesis; coproporphyrinogen-III from 5-aminolevulinate: step 3/4. Functionally, catalyzes cyclization of the linear tetrapyrrole, hydroxymethylbilane, to the macrocyclic uroporphyrinogen III, the fourth step in the heme biosynthetic pathway. In Saccharomyces cerevisiae (strain ATCC 204508 / S288c) (Baker's yeast), this protein is Uroporphyrinogen-III synthase.